The chain runs to 117 residues: Gamma-aminobutyric acid receptor-associated protein-like 3 (117 aa).

The interval 1–22 (MKFQYKEVHPFEYRKKEGEKIR) is interaction with beta-tubulin. The interval 36 to 68 (APKARVPDLDRRKYLVPSDLTDGQFYLLIRKRI) is interaction with GABRG2. Gly-116 carries Phosphatidylethanolamine amidated glycine lipidation. A propeptide (removed in mature form) is located at residue Lys-117.

Belongs to the ATG8 family. Interacts with GABRG2 and beta-tubulin. Post-translationally, the precursor molecule is cleaved by ATG4B to form the cytosolic form, GABARAPL3-I. This is activated by APG7L/ATG7, transferred to ATG3 and conjugated to phospholipid to form the membrane-bound form, GABARAPL3-II. ATG4B also mediates the delipidation required for GABARAPL1 recycling when autophagosomes fuse with lysosomes. In terms of tissue distribution, ubiquitous. Expressed at very high levels in the brain, heart, peripheral blood leukocytes, liver, kidney, placenta and skeletal muscle. Expressed at very low levels in thymus and small intestine.

Its subcellular location is the cytoplasm. The protein resides in the cytoskeleton. It localises to the cytoplasmic vesicle. It is found in the autophagosome membrane. Ubiquitin-like modifier involved in autophagosome formation. Whereas LC3s are involved in elongation of the phagophore membrane, the GABARAP/GATE-16 subfamily is essential for a later stage in autophagosome maturation. The polypeptide is Gamma-aminobutyric acid receptor-associated protein-like 3 (GABARAPL3) (Homo sapiens (Human)).